Here is a 397-residue protein sequence, read N- to C-terminus: ATP-dependent RNA helicase eIF4A (397 aa).

The Q motif signature appears at 23–51; the sequence is YKFDDLNLKPNIVRGIFGYGYETPSAIQQ. Positions 54–224 constitute a Helicase ATP-binding domain; the sequence is ILPITEGRDV…TKFMNNPVRI (171 aa). 67–74 is an ATP binding site; the sequence is AQSGTGKT. Residues 172–175 carry the DEAD box motif; the sequence is DEAD. One can recognise a Helicase C-terminal domain in the interval 255–396; it reads DLYDSISVTQ…EMPADIGSLF (142 aa).

Belongs to the DEAD box helicase family. eIF4A subfamily. As to quaternary structure, component of the eIF4F complex, which composition varies with external and internal environmental conditions. It is composed of at least eIF4A, eIF4E and eIF4G.

Its subcellular location is the cytoplasm. The enzyme catalyses ATP + H2O = ADP + phosphate + H(+). Functionally, ATP-dependent RNA helicase which is a subunit of the eIF4F complex involved in cap recognition and is required for mRNA binding to ribosome. In the current model of translation initiation, eIF4A unwinds RNA secondary structures in the 5'-UTR of mRNAs which is necessary to allow efficient binding of the small ribosomal subunit, and subsequent scanning for the initiator codon. This chain is ATP-dependent RNA helicase eIF4A (TIF1), found in Lodderomyces elongisporus (strain ATCC 11503 / CBS 2605 / JCM 1781 / NBRC 1676 / NRRL YB-4239) (Yeast).